The primary structure comprises 262 residues: MLEQMYEALQRLRKEKPVILNITNYVSMDFLANCFLAIGASPIMSVSDLELEELIGLSSAVYLNIGTLDHLFIQRSYRAVDIAIRQNKPIIFDPVGSGTTKIRTEVSHHLLAHSTIVRGNASKILSFGDLSIKTRGVDSANTTHDAKETAIALANECLCGCAIAVTGAVDFITDGKRSATIELGDPLMSHVTGMGCSLTGVLAAFRSVIDDSFEAARLGVEYFSLCGMLARERCEGPGLFKAYFLDELYAADFDRMRRYYEQ.

Substrate is bound at residue methionine 44. ATP contacts are provided by arginine 118 and threonine 166. Substrate is bound at residue glycine 193.

Belongs to the Thz kinase family. Mg(2+) is required as a cofactor.

The enzyme catalyses 5-(2-hydroxyethyl)-4-methylthiazole + ATP = 4-methyl-5-(2-phosphooxyethyl)-thiazole + ADP + H(+). It functions in the pathway cofactor biosynthesis; thiamine diphosphate biosynthesis; 4-methyl-5-(2-phosphoethyl)-thiazole from 5-(2-hydroxyethyl)-4-methylthiazole: step 1/1. Its function is as follows. Catalyzes the phosphorylation of the hydroxyl group of 4-methyl-5-beta-hydroxyethylthiazole (THZ). The chain is Hydroxyethylthiazole kinase from Chlamydia caviae (strain ATCC VR-813 / DSM 19441 / 03DC25 / GPIC) (Chlamydophila caviae).